Consider the following 123-residue polypeptide: Large ribosomal subunit protein bL12 (123 aa).

Lys-84 carries the post-translational modification N6-methyllysine. The tract at residues 94-123 (PATLKEGMSKEDGDEAKTKLEEAGASVELK) is disordered. Residues 100-115 (GMSKEDGDEAKTKLEE) are compositionally biased toward basic and acidic residues.

It belongs to the bacterial ribosomal protein bL12 family. In terms of assembly, homodimer. Part of the ribosomal stalk of the 50S ribosomal subunit. Forms a multimeric L10(L12)X complex, where L10 forms an elongated spine to which 2 to 4 L12 dimers bind in a sequential fashion. Binds GTP-bound translation factors.

Its function is as follows. Seems to be the binding site for several of the factors involved in protein synthesis and appears to be essential for accurate translation. Functionally, forms part of the ribosomal stalk which helps the ribosome interact with GTP-bound translation factors. Is thus essential for accurate translation. The chain is Large ribosomal subunit protein bL12 from Halophilic eubacterium NRCC 41227.